Here is a 561-residue protein sequence, read N- to C-terminus: MTFGYKLDEDGVTFNLWAPYQRKVKLKILNRGIYEMERDDKGYFTITLDNVRVGDRYKYILDDNSEVPDPASRYQPEGVHGYSEIISPDFEWDDENSVKVKREDLVIYELHIGTFTSEGTFEGVIKKLNYLKELGVTAIEIMPIAQFPGKKDWGYDGVYLYAVQNSYGGPSGFRKLVNEAHKLGLAVILDVVYNHVGPEGNYMVKLGPYFSEKYKTPWGLTFNFDDAGSDEVRKFILENVEYWINEFHVDGFRLDAVHAIIDNSPKHILEDIADVVHKYDKIVIAESDLNDPRVVNPKEKCGYNIDAQWVDDFHHAIHAFLTGERQGYYSDFGSIGDIVKSYKDVFIYDGKYSNFRRKTHGKSVGDLDGCKFVVYIQNHDQVGNRGGGERLIKLVDKESYKIAAALYILSPYIPMIFMGEEYGEENPFYYFSDFSDPKLIQGVREGRRRENGQETDPQSDCTFNDSKLSWKINDDILSFYKSLIKIRKEYGLACNRKLSVENGNYWLTVKGNGCLAVYVFSKSVIEMKYSGTLVLSSNSSFPSQITESKYELDKGFALYKL.

253–258 serves as a coordination point for substrate; the sequence is RLDAVH. The active-site Nucleophile is the aspartate 255. Catalysis depends on glutamate 286, which acts as the Proton donor. Substrate is bound by residues 311–315 and 379–384; these read DDFHH and HDQVGN.

This sequence belongs to the glycosyl hydrolase 13 family. Homodimer.

It localises to the cytoplasm. The catalysed reaction is hydrolysis of (1-&gt;4)-alpha-D-glucosidic linkage in 4-alpha-D-[(1-&gt;4)-alpha-D-glucanosyl]n trehalose to yield trehalose and (1-&gt;4)-alpha-D-glucan.. The protein operates within glycan biosynthesis; trehalose biosynthesis. The chain is Malto-oligosyltrehalose trehalohydrolase (treZ) from Saccharolobus solfataricus (strain ATCC 35092 / DSM 1617 / JCM 11322 / P2) (Sulfolobus solfataricus).